A 345-amino-acid chain; its full sequence is Pectin lyase (345 aa).

Positions methionine 1–glycine 24 are cleaved as a signal peptide. Arginine 234 is an active-site residue.

Belongs to the polysaccharide lyase 1 family.

It is found in the secreted. The catalysed reaction is Eliminative cleavage of (1-&gt;4)-alpha-D-galacturonan methyl ester to give oligosaccharides with 4-deoxy-6-O-methyl-alpha-D-galact-4-enuronosyl groups at their non-reducing ends.. Inhibited by Hg(2+) and Mn(2+). Not affected by EDTA in vitro. Its function is as follows. Catalyzes the depolymerization of pectins of methyl esterification degree from 13 to 75%, with an endo mode of action. Cannot degrade polygalacturonate. Also displays protopectinase activity, i.e. releases pectin from protopectin. This is Pectin lyase (pelB) from Bacillus subtilis.